Consider the following 729-residue polypeptide: Fatty acid oxidation complex subunit alpha (729 aa).

The interval 1 to 189 is enoyl-CoA hydratase/isomerase; sequence MLYKGDTLYL…KIGLVDGVVK (189 aa). Residue D296 coordinates substrate. Residues 311-729 form a 3-hydroxyacyl-CoA dehydrogenase region; the sequence is ETPKQAAVLG…ARPVGDLKTA (419 aa). NAD(+) contacts are provided by residues M324, D343, 400–402, K407, and S429; that span reads VVE. H450 acts as the For 3-hydroxyacyl-CoA dehydrogenase activity in catalysis. N453 is a binding site for NAD(+). Positions 500 and 660 each coordinate substrate. The segment at 707–729 is disordered; it reads ARHNEPYYPPVEPARPVGDLKTA.

The protein in the N-terminal section; belongs to the enoyl-CoA hydratase/isomerase family. This sequence in the C-terminal section; belongs to the 3-hydroxyacyl-CoA dehydrogenase family. Heterotetramer of two alpha chains (FadB) and two beta chains (FadA).

It catalyses the reaction a (3S)-3-hydroxyacyl-CoA + NAD(+) = a 3-oxoacyl-CoA + NADH + H(+). It carries out the reaction a (3S)-3-hydroxyacyl-CoA = a (2E)-enoyl-CoA + H2O. The catalysed reaction is a 4-saturated-(3S)-3-hydroxyacyl-CoA = a (3E)-enoyl-CoA + H2O. The enzyme catalyses (3S)-3-hydroxybutanoyl-CoA = (3R)-3-hydroxybutanoyl-CoA. It catalyses the reaction a (3Z)-enoyl-CoA = a 4-saturated (2E)-enoyl-CoA. It carries out the reaction a (3E)-enoyl-CoA = a 4-saturated (2E)-enoyl-CoA. It functions in the pathway lipid metabolism; fatty acid beta-oxidation. Involved in the aerobic and anaerobic degradation of long-chain fatty acids via beta-oxidation cycle. Catalyzes the formation of 3-oxoacyl-CoA from enoyl-CoA via L-3-hydroxyacyl-CoA. It can also use D-3-hydroxyacyl-CoA and cis-3-enoyl-CoA as substrate. The protein is Fatty acid oxidation complex subunit alpha of Escherichia coli O6:K15:H31 (strain 536 / UPEC).